Consider the following 282-residue polypeptide: MSLLATLGLELDRALLPASGLGWLVDYGKLPPAPAPLAPYEVLGGALEGGLPVGGEPLAGDGFSDWMTERVDFTALLPLEPPLPPGTLPQPSPTPPDLEAMASLLKKELEQMEDFFLDAPPLPPPSPPPLPPPPLPPAPSLPLSLPSFDLPQPPVLDTLDLLAIYCRNEAGQEEVGMPPLPPPQQPPPPSPPQPSRLAPYPHPATTRGDRKQKKRDQNKSAALRYRQRKRAEGEALEGECQGLEARNRELKERAESVEREIQYVKDLLIEVYKARSQRTRSC.

The required for protein stabilization induced by IL1B stretch occupies residues 1 to 21 (MSLLATLGLELDRALLPASGL). An N6-acetyllysine; by EP300 modification is found at lysine 29. Disordered stretches follow at residues 116–152 (FLDA…DLPQ) and 173–238 (EEVG…ALEG). The interval 119–217 (APPLPPPSPP…GDRKQKKRDQ (99 aa)) is interaction with PTP4A1. Over residues 120–140 (PPLPPPSPPPLPPPPLPPAPS) the composition is skewed to pro residues. The segment covering 141 to 150 (LPLSLPSFDL) has biased composition (low complexity). Pro residues predominate over residues 178 to 194 (PPLPPPQQPPPPSPPQP). The 64-residue stretch at 208 to 271 (GDRKQKKRDQ…QYVKDLLIEV (64 aa)) folds into the bZIP domain. The basic motif stretch occupies residues 210–230 (RKQKKRDQNKSAALRYRQRKR). The interval 236–250 (LEGECQGLEARNREL) is leucine-zipper. Phosphoserine is present on serine 256.

This sequence belongs to the bZIP family. In terms of assembly, binds DNA as a dimer. Interacts with PTP4A1/PRL-1. Interacts with CCND3, but not with CCND1 or CCND2. Interacts with HSPA1A or HSPA1B; the interaction protects ATF5 from degradation via proteasome-dependent and caspase-dependent processes. Interacts (via C-terminal region) with NPM1 (via C-terminal region); the interaction leads to loss of association between HSPA1A or HSPA1B and ATF5 and promotes ATF5 degradation via proteasome-dependent and caspase-dependent processes. Interacts with NLK; the interaction stabilizes ATF5 at the protein level in a kinase-independent manner. Interacts with alpha-tubulin, gamma-tubulin members TUBGCP2 and TUBGCP4, PCNT; the ATF5:PCNT:polyglutamylated tubulin (PGT) tripartite unites the mother centriole and the pericentriolar material (PCM) in the centrosome. Interacts with CEBPB and EP300; EP300 is required for ATF5 and CEBPB interaction and DNA binding. Post-translationally, ubiquitinated by CDC34 and UBE2B in order to be degraded by the proteasome. Cisplatin inhibits ubiquitination and proteasome-mediated degradation by inhibiting the interaction with CDC34. Ubiquitination and degradation by the proteasome are inhibited by NLK in a kinase-independent manner. In terms of processing, phosphorylated by NLK, probably at Ser-92, Thr-94, Ser-126 and Ser-190. Acetylated at Lys-29 by EP300, the acetylation enhances the interaction with CEBPB, DNA-binding and transactivation activity. Widely expressed with higher expression levels in liver.

The protein resides in the cytoplasm. The protein localises to the nucleus. It localises to the cytoskeleton. It is found in the microtubule organizing center. Its subcellular location is the centrosome. Its function is as follows. Transcription factor that either stimulates or represses gene transcription through binding of different DNA regulatory elements such as cAMP response element (CRE) (consensus: 5'-GTGACGT[AC][AG]-3'), ATF5-specific response element (ARE) (consensus: 5'-C[CT]TCT[CT]CCTT[AT]-3') but also the amino acid response element (AARE), present in many viral and cellular promoters. Critically involved, often in a cell type-dependent manner, in cell survival, proliferation, and differentiation. Its transcriptional activity is enhanced by CCND3 and slightly inhibited by CDK4. Important regulator of the cerebral cortex formation, functions in cerebral cortical neuroprogenitor cells to maintain proliferation and to block differentiation into neurons. Must be down-regulated in order for such cells to exit the cycle and differentiate. Participates in the pathways by which SHH promotes cerebellar granule neuron progenitor cells proliferation. Critical for survival of mature olfactory sensory neurons (OSN), directs expression of OSN-specific genes. May be involved in osteogenic differentiation. Promotes cell proliferation and survival by inducing the expression of EGR1 sinergistically with ELK1. Once acetylated by EP300, binds to ARE sequences on target genes promoters, such as BCL2 and EGR1. Plays an anti-apoptotic role through the transcriptional regulation of BCL2, this function seems to be cell type-dependent. Cooperates with NR1I3/CAR in the transcriptional activation of CYP2B6 in liver. In hepatic cells, represses CRE-dependent transcription and inhibits proliferation by blocking at G2/M phase. May act as a negative regulator of IL1B transduction pathway in liver. Upon IL1B stimulus, cooperates with NLK to activate the transactivation activity of C/EBP subfamily members. Besides its function of transcription factor, acts as a cofactor of CEBPB to activate CEBPA and promote adipocyte differentiation. Regulates centrosome dynamics in a cell-cycle- and centriole-age-dependent manner. Forms 9-foci symmetrical ring scaffold around the mother centriole to control centrosome function and the interaction between centrioles and pericentriolar material. In Homo sapiens (Human), this protein is Cyclic AMP-dependent transcription factor ATF-5 (ATF5).